Reading from the N-terminus, the 213-residue chain is Orotate phosphoribosyltransferase (213 aa).

Lysine 26 is a 5-phospho-alpha-D-ribose 1-diphosphate binding site. 34 to 35 (FF) lines the orotate pocket. 5-phospho-alpha-D-ribose 1-diphosphate is bound by residues 72-73 (YK), arginine 99, lysine 100, lysine 103, histidine 105, and 124-132 (DDVITAGTA). Residues threonine 128 and arginine 156 each contribute to the orotate site.

It belongs to the purine/pyrimidine phosphoribosyltransferase family. PyrE subfamily. Homodimer. Mg(2+) is required as a cofactor.

The catalysed reaction is orotidine 5'-phosphate + diphosphate = orotate + 5-phospho-alpha-D-ribose 1-diphosphate. It participates in pyrimidine metabolism; UMP biosynthesis via de novo pathway; UMP from orotate: step 1/2. In terms of biological role, catalyzes the transfer of a ribosyl phosphate group from 5-phosphoribose 1-diphosphate to orotate, leading to the formation of orotidine monophosphate (OMP). In Aliivibrio fischeri (strain MJ11) (Vibrio fischeri), this protein is Orotate phosphoribosyltransferase.